The following is a 271-amino-acid chain: Putative pirin-like protein At3g59260 (271 aa).

Belongs to the pirin family.

It localises to the nucleus. This chain is Putative pirin-like protein At3g59260, found in Arabidopsis thaliana (Mouse-ear cress).